A 352-amino-acid chain; its full sequence is DNA integrity scanning protein DisA (352 aa).

Residues Pro-3–Asp-143 form the DAC domain. Residues Gly-71, Leu-89, and Thr-102–Thr-106 each bind ATP.

The protein belongs to the DisA family. As to quaternary structure, homooctamer. The cofactor is Mg(2+).

The catalysed reaction is 2 ATP = 3',3'-c-di-AMP + 2 diphosphate. In terms of biological role, participates in a DNA-damage check-point. DisA forms globular foci that rapidly scan along the chromosomes searching for lesions. Its function is as follows. Also has diadenylate cyclase activity, catalyzing the condensation of 2 ATP molecules into cyclic di-AMP (c-di-AMP). c-di-AMP likely acts as a signaling molecule that may couple DNA integrity with a cellular process. The sequence is that of DNA integrity scanning protein DisA from Thermotoga neapolitana (strain ATCC 49049 / DSM 4359 / NBRC 107923 / NS-E).